A 218-amino-acid polypeptide reads, in one-letter code: Peroxiredoxin-like 2A (218 aa).

The interval M3–V101 is thioredoxin-like fold. Catalysis depends on redox-active residues C74 and C77.

This sequence belongs to the peroxiredoxin-like PRXL2 family. PRXL2A subfamily. As to expression, expressed in kidney, liver, skin, and brain. Widely expressed with highest levels detected in adipose tissue.

It is found in the cytoplasm. It localises to the secreted. In terms of biological role, involved in redox regulation of the cell. Acts as an antioxidant. Inhibits TNFSF11-induced NFKB1 and JUN activation and osteoclast differentiation. May affect bone resorption and help to maintain bone mass. Acts as a negative regulator of macrophage-mediated inflammation by inhibiting macrophage production of inflammatory cytokines, probably through suppression of the MAPK signaling pathway. This chain is Peroxiredoxin-like 2A (Prxl2a), found in Mus musculus (Mouse).